Here is a 27-residue protein sequence, read N- to C-terminus: Small ribosomal subunit protein bTHX (27 aa).

A compositionally biased stretch (basic residues) spans 1–13 (MGKGDRRTRRGKI). The disordered stretch occupies residues 1–27 (MGKGDRRTRRGKIWRGTYGKYRPRKKK).

This sequence belongs to the bacterial ribosomal protein bTHX family. In terms of assembly, part of the 30S ribosomal subunit.

In terms of biological role, binds at the top of the head of the 30S subunit. It stabilizes a number of different RNA elements and thus is important for subunit structure. The polypeptide is Small ribosomal subunit protein bTHX (rpsU) (Thermus aquaticus).